A 172-amino-acid polypeptide reads, in one-letter code: RNA silencing suppressor p19 (172 aa).

Residues 1 to 20 (MERAIQGNDTREQANGERWD) are compositionally biased toward basic and acidic residues. Residues 1-27 (MERAIQGNDTREQANGERWDGGSGGIT) are disordered.

Belongs to the tombusvirus protein p19 family. In terms of assembly, homodimer.

Acts as a suppressor of RNA-mediated gene silencing, also known as post-transcriptional gene silencing (PTGS), a mechanism of plant viral defense that limits the accumulation of viral RNAs. Binds to short interfering RNAs (siRNAs) with high affinity. Acts as a molecular caliper to specifically select siRNAs based on the length of the duplex region of the RNA. This chain is RNA silencing suppressor p19, found in Dianthus caryophyllus (Carnation).